Here is a 257-residue protein sequence, read N- to C-terminus: Hydroxyacylglutathione hydrolase (257 aa).

7 residues coordinate Zn(2+): H54, H56, D58, H59, H113, D137, and H175.

Belongs to the metallo-beta-lactamase superfamily. Glyoxalase II family. Monomer. It depends on Zn(2+) as a cofactor.

It carries out the reaction an S-(2-hydroxyacyl)glutathione + H2O = a 2-hydroxy carboxylate + glutathione + H(+). It participates in secondary metabolite metabolism; methylglyoxal degradation; (R)-lactate from methylglyoxal: step 2/2. In terms of biological role, thiolesterase that catalyzes the hydrolysis of S-D-lactoyl-glutathione to form glutathione and D-lactic acid. In Crocosphaera subtropica (strain ATCC 51142 / BH68) (Cyanothece sp. (strain ATCC 51142)), this protein is Hydroxyacylglutathione hydrolase.